Reading from the N-terminus, the 46-residue chain is VEAEHMCMTMRGVKKPGAKTVTSAVRGTFANVAAARAEVLSFIKND.

Residue C7 participates in Zn(2+) binding.

The protein belongs to the GTP cyclohydrolase I family. As to quaternary structure, homomer.

The catalysed reaction is GTP + H2O = 7,8-dihydroneopterin 3'-triphosphate + formate + H(+). It functions in the pathway cofactor biosynthesis; 7,8-dihydroneopterin triphosphate biosynthesis; 7,8-dihydroneopterin triphosphate from GTP: step 1/1. This chain is GTP cyclohydrolase 1 (folE), found in Bacillus pumilus (Bacillus mesentericus).